Here is a 4092-residue protein sequence, read N- to C-terminus: Dynein heavy chain, cytoplasmic (4092 aa).

The stem stretch occupies residues 1–1757 (MCKNEARLAN…FISQSGYLLQ (1757 aa)). 6 coiled-coil regions span residues 154–175 (VETI…QQLH), 486–508 (KLEQ…LQNT), 542–566 (KVLE…TGLE), 932–959 (VIKL…YVKE), 1042–1063 (YERD…VEDM), and 1681–1705 (KGLL…LVEY). AAA stretches follow at residues 1758 to 1979 (YKFE…VLRN), 2036 to 2273 (QCLK…NDLV), 2379 to 2628 (SLEA…LVRG), and 2722 to 2984 (TFCD…KVGV). ATP-binding positions include 1796 to 1803 (GPAGTGKT), 2074 to 2081 (GKAGCGKT), 2418 to 2425 (GPPGSGKT), and 2760 to 2767 (GASRTGKT). Coiled coils occupy residues 2993-3092 (IDGL…KRKE), 3242-3300 (KTKA…KSLT), and 3532-3608 (ITLT…EEFF). Residues 2993 to 3300 (IDGLRALVKL…RSISLVKSLT (308 aa)) are stalk. 2 AAA regions span residues 3370–3599 (LVTL…NIEK) and 3760–3970 (LNWF…YLEN).

Belongs to the dynein heavy chain family. The dynein complex consists of at least two heavy chains and a number of intermediate and light chains. Interacts with DYN3.

Its subcellular location is the cytoplasm. It localises to the cytoskeleton. Functionally, cytoplasmic dynein acts as a motor for the intracellular retrograde motility of vesicles and organelles along microtubules. Dynein has ATPase activity; the force-producing power stroke is thought to occur on release of ADP. Required to maintain uniform nuclear distribution in hyphae. May play an important role in the proper orientation of the mitotic spindle into the budding daughter cell yeast. Probably required for normal progression of the cell cycle. The sequence is that of Dynein heavy chain, cytoplasmic (DYN1) from Saccharomyces cerevisiae (strain ATCC 204508 / S288c) (Baker's yeast).